The sequence spans 342 residues: GTPase Obg (342 aa).

An Obg domain is found at 1–159; that stretch reads MKFLDLCKVY…RTIWLRLKLI (159 aa). The 168-residue stretch at 160–327 folds into the OBG-type G domain; it reads ADAGLLGLPN…VLRALWAEID (168 aa). GTP is bound by residues 166–173, 191–195, 212–215, 279–282, and 308–310; these read GLPNAGKS, FTTLV, DIPG, NKID, and SGV. Residues Ser-173 and Thr-193 each coordinate Mg(2+).

It belongs to the TRAFAC class OBG-HflX-like GTPase superfamily. OBG GTPase family. In terms of assembly, monomer. Mg(2+) serves as cofactor.

The protein resides in the cytoplasm. In terms of biological role, an essential GTPase which binds GTP, GDP and possibly (p)ppGpp with moderate affinity, with high nucleotide exchange rates and a fairly low GTP hydrolysis rate. Plays a role in control of the cell cycle, stress response, ribosome biogenesis and in those bacteria that undergo differentiation, in morphogenesis control. The polypeptide is GTPase Obg (Cereibacter sphaeroides (strain ATCC 17025 / ATH 2.4.3) (Rhodobacter sphaeroides)).